The primary structure comprises 352 residues: Probable cytosolic iron-sulfur protein assembly protein CIAO1 homolog (352 aa).

7 WD repeats span residues Gly-14 to Gln-53, Cys-63 to Val-102, Gly-107 to Cys-146, Gly-152 to Ala-191, Gly-200 to Pro-240, His-268 to Pro-306, and Ala-319 to Arg-352.

This sequence belongs to the WD repeat CIA1 family.

Functionally, essential component of the cytosolic iron-sulfur (Fe/S) protein assembly machinery. Required for the maturation of extramitochondrial Fe/S proteins. The protein is Probable cytosolic iron-sulfur protein assembly protein CIAO1 homolog of Chlamydomonas reinhardtii (Chlamydomonas smithii).